The primary structure comprises 243 residues: Ras-related protein Rab-12 (243 aa).

Methionine 1 is subject to N-acetylmethionine. The segment at 1–36 is disordered; that stretch reads MDPSAALHRRPAGGSLGAVSPALSGGQARRRKQPPR. 3 positions are modified to phosphoserine: serine 15, serine 20, and serine 24. Glycine 51, valine 52, glycine 53, lysine 54, threonine 55, serine 72, and threonine 73 together coordinate GTP. A Mg(2+)-binding site is contributed by threonine 55. 2 consecutive short sequence motifs (switch) follow at residues 64–78 and 96–113; these read DTFCEACKSTVGVDF and DTAGQERFNSITSAYYRS. Mg(2+)-binding residues include threonine 73 and aspartate 96. Residue glycine 99 coordinates GTP. Residue serine 105 is modified to Phosphoserine; by LRRK2. Residues asparagine 154, lysine 155, aspartate 157, serine 185, alanine 186, and lysine 187 each contribute to the GTP site. 2 S-geranylgeranyl cysteine lipidation sites follow: cysteine 242 and cysteine 243.

Belongs to the small GTPase superfamily. Rab family. Interacts with RABIF and OPTN. Interacts with LRRK2; interaction facilitates phosphorylation of Ser-105. Interacts with GDI1, GDI2, CHM and CHML; these interactions are disrupted by phosphorylation on Ser-105. Interacts with RILPL1 and RILPL2; these interactions are dependent on phosphorylation of Ser-105. Requires Mg(2+) as cofactor. In terms of processing, phosphorylation of Ser-105 in the switch II region by LRRK2 prevents the association of RAB regulatory proteins, including CHM, CHML and RAB GDP dissociation inhibitors GDI1 and GDI2. Ubiquitously expressed.

It localises to the recycling endosome membrane. The protein localises to the lysosome membrane. The protein resides in the golgi apparatus membrane. Its subcellular location is the cytoplasmic vesicle. It is found in the autophagosome. It catalyses the reaction GTP + H2O = GDP + phosphate + H(+). Its activity is regulated as follows. Regulated by guanine nucleotide exchange factors (GEFs) including DENND3 which promote the exchange of bound GDP for free GTP. Regulated by GTPase activating proteins (GAPs) which increase the GTP hydrolysis activity. Inhibited by GDP dissociation inhibitors (GDIs). The small GTPases Rab are key regulators of intracellular membrane trafficking, from the formation of transport vesicles to their fusion with membranes. Rabs cycle between an inactive GDP-bound form and an active GTP-bound form that is able to recruit to membranes different set of downstream effectors directly responsible for vesicle formation, movement, tethering and fusion. RAB12 may play a role in protein transport from recycling endosomes to lysosomes regulating, for instance, the degradation of the transferrin receptor. Involved in autophagy. The chain is Ras-related protein Rab-12 from Mus musculus (Mouse).